A 588-amino-acid polypeptide reads, in one-letter code: Aspartate--tRNA ligase (588 aa).

Residue glutamate 174 participates in L-aspartate binding. The tract at residues 198–201 (QLFK) is aspartate. Arginine 220 provides a ligand contact to L-aspartate. ATP-binding positions include 220–222 (RDE) and glutamine 229. Histidine 448 is a binding site for L-aspartate. Position 482 (glutamate 482) interacts with ATP. Arginine 489 is an L-aspartate binding site. Position 534–537 (534–537 (GIDR)) interacts with ATP.

The protein belongs to the class-II aminoacyl-tRNA synthetase family. Type 1 subfamily. In terms of assembly, homodimer.

Its subcellular location is the cytoplasm. The catalysed reaction is tRNA(Asp) + L-aspartate + ATP = L-aspartyl-tRNA(Asp) + AMP + diphosphate. Its function is as follows. Catalyzes the attachment of L-aspartate to tRNA(Asp) in a two-step reaction: L-aspartate is first activated by ATP to form Asp-AMP and then transferred to the acceptor end of tRNA(Asp). The chain is Aspartate--tRNA ligase from Xanthomonas oryzae pv. oryzae (strain MAFF 311018).